The following is a 450-amino-acid chain: Bifunctional protein GlmU (450 aa).

The pyrophosphorylase stretch occupies residues 1 to 226 (MLAVAVLAAG…ADEVNGINNR (226 aa)). UDP-N-acetyl-alpha-D-glucosamine is bound by residues 7–10 (LAAG), K21, Q73, and 78–79 (GT). Mg(2+) is bound at residue D103. UDP-N-acetyl-alpha-D-glucosamine is bound by residues G140, E155, N170, and N224. N224 lines the Mg(2+) pocket. The tract at residues 227 to 247 (RQLAQCEALLQQRLRHHWMDE) is linker. The segment at 248-450 (GVTFIDPESC…TKEGWAERKV (203 aa)) is N-acetyltransferase. The UDP-N-acetyl-alpha-D-glucosamine site is built by R329 and K347. The Proton acceptor role is filled by H359. UDP-N-acetyl-alpha-D-glucosamine-binding residues include Y362 and N373. Acetyl-CoA contacts are provided by residues A376, 382–383 (NY), A419, and R436.

This sequence in the N-terminal section; belongs to the N-acetylglucosamine-1-phosphate uridyltransferase family. The protein in the C-terminal section; belongs to the transferase hexapeptide repeat family. In terms of assembly, homotrimer. It depends on Mg(2+) as a cofactor.

The protein resides in the cytoplasm. It carries out the reaction alpha-D-glucosamine 1-phosphate + acetyl-CoA = N-acetyl-alpha-D-glucosamine 1-phosphate + CoA + H(+). It catalyses the reaction N-acetyl-alpha-D-glucosamine 1-phosphate + UTP + H(+) = UDP-N-acetyl-alpha-D-glucosamine + diphosphate. The protein operates within nucleotide-sugar biosynthesis; UDP-N-acetyl-alpha-D-glucosamine biosynthesis; N-acetyl-alpha-D-glucosamine 1-phosphate from alpha-D-glucosamine 6-phosphate (route II): step 2/2. It participates in nucleotide-sugar biosynthesis; UDP-N-acetyl-alpha-D-glucosamine biosynthesis; UDP-N-acetyl-alpha-D-glucosamine from N-acetyl-alpha-D-glucosamine 1-phosphate: step 1/1. Its pathway is bacterial outer membrane biogenesis; LPS lipid A biosynthesis. Its function is as follows. Catalyzes the last two sequential reactions in the de novo biosynthetic pathway for UDP-N-acetylglucosamine (UDP-GlcNAc). The C-terminal domain catalyzes the transfer of acetyl group from acetyl coenzyme A to glucosamine-1-phosphate (GlcN-1-P) to produce N-acetylglucosamine-1-phosphate (GlcNAc-1-P), which is converted into UDP-GlcNAc by the transfer of uridine 5-monophosphate (from uridine 5-triphosphate), a reaction catalyzed by the N-terminal domain. The sequence is that of Bifunctional protein GlmU from Synechococcus sp. (strain CC9605).